A 393-amino-acid chain; its full sequence is uncharacterized protein (393 aa).

Residues 164-183 (ASDPHPGKNSPASPTGENKE) are disordered. Residues 173–183 (SPASPTGENKE) show a composition bias toward polar residues.

This is an uncharacterized protein from Treponema pallidum (strain Nichols).